The following is a 1372-amino-acid chain: DNA-directed RNA polymerase subunit beta (1372 aa).

This sequence belongs to the RNA polymerase beta chain family. As to quaternary structure, the RNAP catalytic core consists of 2 alpha, 1 beta, 1 beta' and 1 omega subunit. When a sigma factor is associated with the core the holoenzyme is formed, which can initiate transcription.

It carries out the reaction RNA(n) + a ribonucleoside 5'-triphosphate = RNA(n+1) + diphosphate. Its function is as follows. DNA-dependent RNA polymerase catalyzes the transcription of DNA into RNA using the four ribonucleoside triphosphates as substrates. This is DNA-directed RNA polymerase subunit beta from Nitratidesulfovibrio vulgaris (strain DP4) (Desulfovibrio vulgaris).